A 172-amino-acid chain; its full sequence is Large ribosomal subunit protein uL10 (172 aa).

The protein belongs to the universal ribosomal protein uL10 family. Part of the ribosomal stalk of the 50S ribosomal subunit. The N-terminus interacts with L11 and the large rRNA to form the base of the stalk. The C-terminus forms an elongated spine to which 3 L12 dimers bind in a sequential fashion forming a heptameric L10(L12)2(L12)2(L12)2 complex.

Functionally, forms part of the ribosomal stalk, playing a central role in the interaction of the ribosome with GTP-bound translation factors. In Agrobacterium fabrum (strain C58 / ATCC 33970) (Agrobacterium tumefaciens (strain C58)), this protein is Large ribosomal subunit protein uL10.